The sequence spans 64 residues: Protein DsrB (64 aa).

It belongs to the DsrB family.

This is Protein DsrB from Salmonella enteritidis PT4 (strain P125109).